We begin with the raw amino-acid sequence, 137 residues long: Large ribosomal subunit protein uL16 (137 aa).

Positions 1-16 are enriched in basic residues; that stretch reads MLQPKRTKFRKMQKGR. A disordered region spans residues 1–22; that stretch reads MLQPKRTKFRKMQKGRIRGEAK.

The protein belongs to the universal ribosomal protein uL16 family. Part of the 50S ribosomal subunit.

Binds 23S rRNA and is also seen to make contacts with the A and possibly P site tRNAs. The chain is Large ribosomal subunit protein uL16 from Jannaschia sp. (strain CCS1).